The chain runs to 196 residues: uncharacterized protein (196 aa).

This is an uncharacterized protein from Caenorhabditis elegans.